We begin with the raw amino-acid sequence, 325 residues long: Hydroxylase/desaturase poxK (325 aa).

Low complexity predominate over residues 1–12; the sequence is MTATATPVPTVA. A disordered region spans residues 1–25; it reads MTATATPVPTVASHAQDITLPPPPK.

Belongs to the asaB hydroxylase/desaturase family.

The protein operates within secondary metabolite biosynthesis. Its function is as follows. Hydroxylase/desaturase; part of the gene cluster that mediates the biosynthesis of oxaleimides, cytotoxic compounds containing an unusual disubstituted succinimide moiety. The first step of the pathway is provided by the HR-PKS poxF that serves in a new mode of collaborative biosynthesis with the PKS-NRPS poxE, by providing the olefin containing amino acid substrate via the synthesis of an ACP-bound dec-4-enoate. The cytochrome P450 monooxygenase poxM-catalyzed oxidation at the alpha-position creates the enzyme-bound 2-hydroxydec-4-enoyl-ACP thioester, which may be prone to spontaneous hydrolysis to yield 2-hydroxydec-4-enoic acid due to increased electrophilicity of the carbonyl. 2-hydroxydec-4-enoic acid can then be further oxidized by poxM to yield the alpha-ketoacid 2-oxodec-4-enoicacid, which is reductively aminated by the aminotransferase poxL to yield (S,E)-2-aminodec-4-enoic acid. The Hybrid PKS-NRPS synthetase poxE then performs condensation between the octaketide product of its PKS modules and the amino group of (S,E)-2-aminodec-4-enoic acid which is activated and incorporated by the adenylation domain. The resulting aminoacyl product can be cyclized by the Diels-Alderase PoxQ and reductively released by the reductive (R) domain of poxE to yield an aldehyde intermediate. The released aldehyde is then substrate for a Knoevenagel condensation by the hydrolyase poxO followed by an oxidation at the 5-position of the pyrrolidone ring. The presence of the olefin from the amino acid building block allows for migration of the substituted allyl group to occur. This allylic transposition reaction takes place in a conjugate addition, semipinacol-like fashion to yield a succinimide intermediate. Iterative two-electron oxidations of the C7 methyl of the succinimide intermediate to the carboxylic acid can be catalyzed by one of two remaining cytochrome P450 monooxygenasess poxC or poxD to yield oxaleimide A. Subsequent oxidation yields the maleimide scaffold oxaleimide I. Both oxaleimide A and oxaleimide I can undergo oxidative modifications in the decalin ring to yield the series of products oxaleimides B to H. The chain is Hydroxylase/desaturase poxK from Penicillium oxalicum (strain 114-2 / CGMCC 5302) (Penicillium decumbens).